We begin with the raw amino-acid sequence, 185 residues long: ATP-dependent protease subunit HslV (185 aa).

Residue Thr13 is part of the active site. Residues Gly167, Cys170, and Thr173 each coordinate Na(+).

Belongs to the peptidase T1B family. HslV subfamily. In terms of assembly, a double ring-shaped homohexamer of HslV is capped on each side by a ring-shaped HslU homohexamer. The assembly of the HslU/HslV complex is dependent on binding of ATP.

The protein localises to the cytoplasm. The catalysed reaction is ATP-dependent cleavage of peptide bonds with broad specificity.. With respect to regulation, allosterically activated by HslU binding. Its function is as follows. Protease subunit of a proteasome-like degradation complex believed to be a general protein degrading machinery. In Sinorhizobium fredii (strain NBRC 101917 / NGR234), this protein is ATP-dependent protease subunit HslV.